A 204-amino-acid chain; its full sequence is bMERB domain-containing protein 1 (204 aa).

The bMERB domain occupies 3–150 (LKQSLSTHLE…EQEEDKEMAD (148 aa)). The interval 162–187 (VTKSPASSRAEKKAEPPPSKPTVAKT) is disordered.

In Homo sapiens (Human), this protein is bMERB domain-containing protein 1.